The primary structure comprises 499 residues: MGGYILAIDQGTTSTRSMVFDRDMRVIGVGQREFPQHFPASGWVEHDAEDIWKSVLETIRLALADAGIAASDIAAIGITNQRETTVLWDRNTGEAVHRAVVWQDRRAAPVCEDLKRRGLEPLFSKKTGLLLDPYFSGTKLKWLLDSVSGLREKAVKGEICFGTVDSFLIYRLTGGRRHVTDATNASRTLIYNIEDNAWDDELLSILNIPRAMLPEVLDCAADFGVTDKALLGAEIPILGVAGDQQAAVIGNACFEPGMMKSTYGTGCFALLNTGTDRVASTNRLLTTIAYRLDGVTTYALEGSIFIAGAAVQWLRDELGFISVASEVSALAEKADPKQRVYLVPAFTGLGAPYWDAEARGAIFGLTRGTGPAEFARAALESVAYQTFDLLDAMRKDWAGDNGKTVLRVDGGMVASDWTMQRLADILAAPVDRPVFLETTILGAAWLAASRAGIWPDRKAFADHWRRDRRFSPDMEESERKNAIAGWRDSVGRCLSKRDN.

Thr12 is a binding site for ADP. Thr12, Thr13, and Ser14 together coordinate ATP. Residue Thr12 coordinates sn-glycerol 3-phosphate. Arg16 serves as a coordination point for ADP. Arg82, Glu83, Tyr134, and Asp243 together coordinate sn-glycerol 3-phosphate. Glycerol contacts are provided by Arg82, Glu83, Tyr134, Asp243, and Gln244. Residues Thr265 and Gly308 each contribute to the ADP site. Residues Thr265, Gly308, Gln312, and Gly411 each coordinate ATP. An ADP-binding site is contributed by Gly411.

The protein belongs to the FGGY kinase family.

The catalysed reaction is glycerol + ATP = sn-glycerol 3-phosphate + ADP + H(+). It participates in polyol metabolism; glycerol degradation via glycerol kinase pathway; sn-glycerol 3-phosphate from glycerol: step 1/1. With respect to regulation, inhibited by fructose 1,6-bisphosphate (FBP). Key enzyme in the regulation of glycerol uptake and metabolism. Catalyzes the phosphorylation of glycerol to yield sn-glycerol 3-phosphate. This chain is Glycerol kinase, found in Agrobacterium fabrum (strain C58 / ATCC 33970) (Agrobacterium tumefaciens (strain C58)).